The primary structure comprises 829 residues: Protein Jade-1 (829 aa).

Over residues 1 to 10 (MKRSRVPSTS) the composition is skewed to polar residues. Positions 1-40 (MKRSRVPSTSEDSDNGSNSTSWSQHSNSKHRKQSGKRPSE) are disordered. Low complexity predominate over residues 15–26 (NGSNSTSWSQHS). The PHD-type 1 zinc-finger motif lies at 196–246 (DVVCDVCQSPDGEDGNEMVFCDKCNICVHQACYGILKVPEGSWLCRTCALG). The C2HC pre-PHD-type zinc-finger motif lies at 248–282 (FPKCHLCPKKGGAMKPTRSGTKWVHVSCALWIPEV). The PHD-type 2 zinc finger occupies 306–362 (LICCLCKEKTGACIQCSAKSCRVAFHVTCGLHCGLKMNTILTEADEVKFKSFCPKHS). 3 disordered regions span residues 368–408 (EEEG…PEET), 556–651 (PPVP…RRKS), and 697–829 (ATAP…VLAS). The segment covering 374–390 (DRPVKVPTREDRSRNRG) has biased composition (basic and acidic residues). Composition is skewed to polar residues over residues 394–405 (SASSQTRLSQNP), 570–586 (GQNSTLSSSEKGSNSYR), and 607–619 (SGDSVRSETVMSA). Residues 622-648 (RRSEGRTRSGESHRKEEESERPLEDRR) are compositionally biased toward basic and acidic residues. The span at 697–714 (ATAPNMYSGSPRKTNASH) shows a compositional bias: polar residues. The span at 738-754 (KRSERTSAGRQTERQEA) shows a compositional bias: basic and acidic residues. Low complexity predominate over residues 762–774 (SSLKTFSTSPSSP). The segment covering 782-792 (TGSENRRHLEE) has biased composition (basic and acidic residues).

The protein belongs to the JADE family. Component of the HBO1 complex composed.

Its subcellular location is the nucleus. The protein localises to the chromosome. The protein resides in the cytoplasm. It localises to the cytoskeleton. It is found in the cilium basal body. Functionally, scaffold subunit of some HBO1 complexes, which have a histone H4 acetyltransferase activity. Plays a key role in HBO1 complex by directing KAT7/HBO1 specificity towards histone H4 acetylation (H4K5ac, H4K8ac and H4K12ac), regulating DNA replication initiation, regulating DNA replication initiation. In Danio rerio (Zebrafish), this protein is Protein Jade-1 (jade1).